Reading from the N-terminus, the 349-residue chain is Thiamine thiazole synthase, chloroplastic (349 aa).

Residues 1–45 (MAAIASTLSLSSTKPQRLFDSSFHGSAISAAPISIGLKPRSFSVR) constitute a chloroplast transit peptide. Substrate is bound by residues Ala94, 114-115 (EQ), Gly122, and Ala187. Cys216 carries the 2,3-didehydroalanine (Cys) modification. Residues Asp218, His233, Met285, and 295–297 (RMG) each bind substrate.

Belongs to the THI4 family. As to quaternary structure, homooctamer. Interacts with RBCX1 and RBCX1. Interacts with CPK33. Fe cation serves as cofactor. In terms of processing, during the catalytic reaction, a sulfide is transferred from Cys-216 to a reaction intermediate, generating a dehydroalanine residue. Not phosphorylated in vitro by CPK33. In terms of tissue distribution, expressed at high levels in chloroplast-containing parenchymatic cells of leaves, inflorescence shoots and flowers, and at lower levels in the vascular system. In young plants, detected in roots and shoots including cotyledons, leaves and hypocotyls. Also observed in apical meristematic regions, siliques and embryos. Low expression in roots, limited to the vascular tissue. Broadly expressed in roots, cotyledons, leaves, hypocotyls, inflorescences, siliques, and strongly in guard cells.

Its subcellular location is the plastid. It localises to the chloroplast. It is found in the mitochondrion. The protein resides in the cell membrane. It catalyses the reaction [ADP-thiazole synthase]-L-cysteine + glycine + NAD(+) = [ADP-thiazole synthase]-dehydroalanine + ADP-5-ethyl-4-methylthiazole-2-carboxylate + nicotinamide + 3 H2O + 2 H(+). Its function is as follows. Involved in biosynthesis of the thiamine precursor thiazole. Catalyzes the conversion of NAD and glycine to adenosine diphosphate 5-(2-hydroxyethyl)-4-methylthiazole-2-carboxylic acid (ADT), an adenylated thiazole intermediate. The reaction includes an iron-dependent sulfide transfer from a conserved cysteine residue of the protein to a thiazole intermediate. The enzyme can only undergo a single turnover, which suggests it is a suicide enzyme. May have additional roles in adaptation to various stress conditions and in DNA damage tolerance. Acts as a positive regulator for the abscisic acid-induced activation of slow type anion channels during stomatal closure by repressing CPK33 kinase activity. This is Thiamine thiazole synthase, chloroplastic from Arabidopsis thaliana (Mouse-ear cress).